The primary structure comprises 720 residues: Receptor-like protein CLAVATA2 (720 aa).

A signal peptide spans methionine 1–serine 25. The segment at glutamine 26–serine 92 is N-cap. The Extracellular portion of the chain corresponds to glutamine 26–serine 686. 6 N-linked (GlcNAc...) asparagine glycosylation sites follow: asparagine 49, asparagine 62, asparagine 84, asparagine 108, asparagine 127, and asparagine 168. An intrachain disulfide couples cysteine 60 to cysteine 68. LRR repeat units follow at residues leucine 96–asparagine 122, arginine 124–leucine 144, glutamate 146–asparagine 168, serine 170–leucine 194, lysine 195–proline 217, valine 219–serine 238, arginine 239–leucine 263, lysine 264–serine 287, glutamate 288–threonine 311, lysine 314–leucine 338, lysine 339–leucine 362, tyrosine 364–cysteine 386, glutamine 388–leucine 410, aspartate 411–serine 436, glutamate 438–tryptophan 458, serine 459–phenylalanine 482, lysine 484–serine 506, leucine 547–glutamine 571, asparagine 573–leucine 594, proline 595–alanine 617, and proline 619–leucine 641. An N-linked (GlcNAc...) asparagine glycan is attached at asparagine 206. The N-linked (GlcNAc...) asparagine glycan is linked to asparagine 270. An N-linked (GlcNAc...) asparagine glycan is attached at asparagine 361. Residue asparagine 398 is glycosylated (N-linked (GlcNAc...) asparagine). A glycan (N-linked (GlcNAc...) asparagine) is linked at asparagine 446. Asparagine 505 carries an N-linked (GlcNAc...) asparagine glycan. N-linked (GlcNAc...) asparagine glycosylation is found at asparagine 578, asparagine 614, and asparagine 625. The C-cap/acidic domain stretch occupies residues alanine 649 to glutamate 682. The chain crosses the membrane as a helical span at residues isoleucine 687 to cysteine 707. The Cytoplasmic segment spans residues serine 708–alanine 720.

It belongs to the RLP family. As to quaternary structure, parts of a tetrameric complex made of two CLV2/CRN heterodimers that can interact with CLV3 and CLE peptides. CLV2/CRN heterodimer interacts with CLV1 homodimers. Interacts with CRN; this dimer can interact with BAM3. Interacts with CLE14. Mostly expressed in apices (e.g. shoot apical meristem and flower buds), and, to a lower extent, in flowers, leaves, seedlings and siliques. Also expressed in the inner tissues of the proximal root meristem. Expressed throughout the vascular cylinder of root tips.

It localises to the cell membrane. The protein localises to the endoplasmic reticulum membrane. Its function is as follows. Involved in the perception of CLV3 and CLV3-like (CLE) peptides, that act as extracellular signals regulating meristems maintenance. Required for the sensing of the root CLE peptides (e.g. CLE8, CLE9/CLE10, CLE11, CLE13, CLE14, CLE16, CLE17, CLE18, CLE20, CLE21, CLE25, CLE26, CLE40, CLE41/CLE44 and CLE45), which also involves CRN and leads to root growth regulation, mostly in the phloem and protophloem. Involved in controlling the stem cell population size in shoot and root apical meristems, and during organ development. Promotes the formation of CLV1 multimers. In complex with CRN, perceives secreted CLV3-like effector proteins from plant-parasitic cyst nematodes as ligand mimics of the plant CLE signaling pathway. This recognition is required for proper feeding structure (syncytium) development and ultimately successful nematode infection. CLE14 perception by CLV2/CRN complex triggers root meristem differentiation. The sequence is that of Receptor-like protein CLAVATA2 from Arabidopsis thaliana (Mouse-ear cress).